Here is a 223-residue protein sequence, read N- to C-terminus: Probable GTP-binding protein EngB (223 aa).

The EngB-type G domain occupies 49–223 (MGVEIAFAGR…LRAALAGLTD (175 aa)). Residues 57–64 (GRSNVGKS), 84–88 (GRTKQ), 102–105 (DMPG), 169–172 (TKAD), and 203–205 (TSS) contribute to the GTP site. Mg(2+) contacts are provided by Ser-64 and Thr-86.

Belongs to the TRAFAC class TrmE-Era-EngA-EngB-Septin-like GTPase superfamily. EngB GTPase family. It depends on Mg(2+) as a cofactor.

Functionally, necessary for normal cell division and for the maintenance of normal septation. In Granulibacter bethesdensis (strain ATCC BAA-1260 / CGDNIH1), this protein is Probable GTP-binding protein EngB.